A 266-amino-acid polypeptide reads, in one-letter code: Protein STAY-GREEN homolog, chloroplastic (266 aa).

A chloroplast-targeting transit peptide spans 1–50 (MGTLTASLVAPSKLNPEKHSSLFVYKTRRKSHKNQSIVPVARLFGPAIFE).

This sequence belongs to the staygreen family.

It localises to the plastid. It is found in the chloroplast. Its function is as follows. Required to trigger chlorophyll degradation during leaf senescence and fruit ripening. This is Protein STAY-GREEN homolog, chloroplastic from Capsicum annuum (Capsicum pepper).